We begin with the raw amino-acid sequence, 779 residues long: Filament-like plant protein 1 (779 aa).

Residues 1–14 (MEKRKRESSERSFG) show a composition bias toward basic and acidic residues. 3 disordered regions span residues 1-55 (MEKR…ETEK), 253-274 (ASFNDHRSTDSHSDGGERMDVS), and 315-336 (PETPDGNGKSGPESVTEEVVVP). Residues 47 to 200 (VSLEVETEKE…KENVMLRHEL (154 aa)) are a coiled coil. Positions 256–272 (NDHRSTDSHSDGGERMD) are enriched in basic and acidic residues. The segment covering 324–336 (SGPESVTEEVVVP) has biased composition (low complexity). Residues 337–674 (SENSLASEIE…ANCQKTIASL (338 aa)) are a coiled coil. The segment covering 718–731 (FMTRNHPESIKPTK) has biased composition (basic and acidic residues). Residues 718 to 764 (FMTRNHPESIKPTKETSPSSSSSTASAAVSMPVSTNRGSSEKNRNGF) form a disordered region. The segment covering 733 to 752 (TSPSSSSSTASAAVSMPVST) has biased composition (low complexity).

Belongs to the FPP family. Interacts with WPP/MAF proteins.

This is Filament-like plant protein 1 (FPP1) from Arabidopsis thaliana (Mouse-ear cress).